A 200-amino-acid chain; its full sequence is Signal peptidase complex catalytic subunit SEC11 (200 aa).

Residues 1–15 (MFAELAPYLSNPRQT) lie on the Cytoplasmic side of the membrane. The helical; Signal-anchor for type II membrane protein transmembrane segment at 16 to 33 (LAQILNFALVLSTAFMGW) threads the bilayer. Topologically, residues 34–200 (KALSVYTNSS…MGVMVMLQRE (167 aa)) are lumenal. A glycan (N-linked (GlcNAc...) asparagine) is linked at Asn-41. Catalysis depends on charge relay system residues Ser-53 and His-92. The disordered stretch occupies residues 101–131 (GDGGKKSQRRLEKEADKRSGPGLSSPISHQM). Basic and acidic residues predominate over residues 103 to 119 (GGKKSQRRLEKEADKRS). The active-site Charge relay system is the Asp-142. Residues 186 to 197 (VLLGIMGVMVML) are C-terminal short (CTS) helix.

The protein belongs to the peptidase S26B family. As to quaternary structure, component of the signal peptidase complex (SPC) composed of a catalytic subunit SEC11 and three accessory subunits SPC1, SPC2 and SPC3. The complex induces a local thinning of the ER membrane which is used to measure the length of the signal peptide (SP) h-region of protein substrates. This ensures the selectivity of the complex towards h-regions shorter than 18-20 amino acids. SPC associates with the translocon complex.

It localises to the endoplasmic reticulum membrane. It carries out the reaction Cleavage of hydrophobic, N-terminal signal or leader sequences from secreted and periplasmic proteins.. Its function is as follows. Catalytic component of the signal peptidase complex (SPC) which catalyzes the cleavage of N-terminal signal sequences from nascent proteins as they are translocated into the lumen of the endoplasmic reticulum. Specifically cleaves N-terminal signal peptides that contain a hydrophobic alpha-helix (h-region) shorter than 18-20 amino acids. In Arthroderma gypseum (strain ATCC MYA-4604 / CBS 118893) (Microsporum gypseum), this protein is Signal peptidase complex catalytic subunit SEC11 (SEC11).